We begin with the raw amino-acid sequence, 482 residues long: tRNA sulfurtransferase (482 aa).

Positions 61–165 constitute a THUMP domain; the sequence is AQYLETLACI…NDELYIISAV (105 aa). ATP is bound by residues 183-184, K265, G287, and Q296; that span reads LL. C344 and C456 form a disulfide bridge. Residues 404–482 enclose the Rhodanese domain; the sequence is LAADEVILDI…GFDNVKVYRP (79 aa). Residue C456 is the Cysteine persulfide intermediate of the active site.

This sequence belongs to the ThiI family.

The protein resides in the cytoplasm. The catalysed reaction is [ThiI sulfur-carrier protein]-S-sulfanyl-L-cysteine + a uridine in tRNA + 2 reduced [2Fe-2S]-[ferredoxin] + ATP + H(+) = [ThiI sulfur-carrier protein]-L-cysteine + a 4-thiouridine in tRNA + 2 oxidized [2Fe-2S]-[ferredoxin] + AMP + diphosphate. It catalyses the reaction [ThiS sulfur-carrier protein]-C-terminal Gly-Gly-AMP + S-sulfanyl-L-cysteinyl-[cysteine desulfurase] + AH2 = [ThiS sulfur-carrier protein]-C-terminal-Gly-aminoethanethioate + L-cysteinyl-[cysteine desulfurase] + A + AMP + 2 H(+). It functions in the pathway cofactor biosynthesis; thiamine diphosphate biosynthesis. Catalyzes the ATP-dependent transfer of a sulfur to tRNA to produce 4-thiouridine in position 8 of tRNAs, which functions as a near-UV photosensor. Also catalyzes the transfer of sulfur to the sulfur carrier protein ThiS, forming ThiS-thiocarboxylate. This is a step in the synthesis of thiazole, in the thiamine biosynthesis pathway. The sulfur is donated as persulfide by IscS. This chain is tRNA sulfurtransferase, found in Aeromonas salmonicida (strain A449).